The following is a 555-amino-acid chain: Glutamine--tRNA ligase (555 aa).

A 'HIGH' region motif is present at residues 34–44; sequence PEPNGYLHIGH. Residues 35–37 and 41–47 each bind ATP; these read EPN and HIGHAKS. Residues Asp67 and Tyr212 each contribute to the L-glutamine site. Residues Thr231, 261-262, and 269-271 contribute to the ATP site; these read RL and MSK. Positions 268-272 match the 'KMSKS' region motif; it reads VMSKR. The tract at residues 317–324 is interaction with tRNA; it reads TKQDNTIE.

This sequence belongs to the class-I aminoacyl-tRNA synthetase family. As to quaternary structure, monomer.

The protein localises to the cytoplasm. The enzyme catalyses tRNA(Gln) + L-glutamine + ATP = L-glutaminyl-tRNA(Gln) + AMP + diphosphate. The sequence is that of Glutamine--tRNA ligase from Salmonella paratyphi B (strain ATCC BAA-1250 / SPB7).